A 264-amino-acid chain; its full sequence is Glutamate racemase (264 aa).

Substrate is bound by residues 12–13 (DS) and 44–45 (YG). C76 functions as the Proton donor/acceptor in the catalytic mechanism. 77–78 (NT) contributes to the substrate binding site. Catalysis depends on C186, which acts as the Proton donor/acceptor. 187–188 (TH) serves as a coordination point for substrate.

Belongs to the aspartate/glutamate racemases family.

It carries out the reaction L-glutamate = D-glutamate. It functions in the pathway cell wall biogenesis; peptidoglycan biosynthesis. Its function is as follows. Provides the (R)-glutamate required for cell wall biosynthesis. The polypeptide is Glutamate racemase (Fusobacterium nucleatum subsp. nucleatum (strain ATCC 25586 / DSM 15643 / BCRC 10681 / CIP 101130 / JCM 8532 / KCTC 2640 / LMG 13131 / VPI 4355)).